A 264-amino-acid chain; its full sequence is Indole-3-glycerol phosphate synthase (264 aa).

This sequence belongs to the TrpC family.

It carries out the reaction 1-(2-carboxyphenylamino)-1-deoxy-D-ribulose 5-phosphate + H(+) = (1S,2R)-1-C-(indol-3-yl)glycerol 3-phosphate + CO2 + H2O. The protein operates within amino-acid biosynthesis; L-tryptophan biosynthesis; L-tryptophan from chorismate: step 4/5. The protein is Indole-3-glycerol phosphate synthase of Stenotrophomonas maltophilia (strain K279a).